Consider the following 419-residue polypeptide: Hyaluronan synthase (419 aa).

Transmembrane regions (helical) follow at residues 8-28 (LIVL…MYLF), 33-53 (VGIY…LSFL), 318-338 (IVAL…VAIG), 345-365 (AIQL…IVAL), and 376-396 (PASF…LQPL).

This sequence belongs to the NodC/HAS family. Mg(2+) serves as cofactor.

The protein localises to the cell membrane. The enzyme catalyses [hyaluronan](n) + UDP-N-acetyl-alpha-D-glucosamine = N-acetyl-beta-D-glucosaminyl-(1-&gt;4)-[hyaluronan](n) + UDP + H(+). It catalyses the reaction N-acetyl-beta-D-glucosaminyl-(1-&gt;4)-[hyaluronan](n) + UDP-alpha-D-glucuronate = [hyaluronan](n+1) + UDP + H(+). The protein operates within glycan biosynthesis; hyaluronan biosynthesis. Glycosaminoglycan synthesis. The hyaluronic acid capsule is involved in the pathogenicity of group A Streptococci; it may be the major virulence determinant. The sequence is that of Hyaluronan synthase (hasA) from Streptococcus pyogenes serotype M6 (strain ATCC BAA-946 / MGAS10394).